The sequence spans 330 residues: ADP-L-glycero-D-manno-heptose-6-epimerase (330 aa).

NADP(+) is bound by residues 11-12, 32-33, lysine 39, lysine 54, 75-79, and asparagine 92; these read FI, DN, and EGACS. Tyrosine 139 serves as the catalytic Proton acceptor. Residue lysine 143 participates in NADP(+) binding. Substrate is bound at residue asparagine 168. Positions 169 and 177 each coordinate NADP(+). The Proton acceptor role is filled by lysine 177. Substrate contacts are provided by residues arginine 179, histidine 186, 200-203, arginine 213, and tyrosine 292; that span reads FGEY.

Belongs to the NAD(P)-dependent epimerase/dehydratase family. HldD subfamily. In terms of assembly, homopentamer. It depends on NADP(+) as a cofactor.

The enzyme catalyses ADP-D-glycero-beta-D-manno-heptose = ADP-L-glycero-beta-D-manno-heptose. It participates in nucleotide-sugar biosynthesis; ADP-L-glycero-beta-D-manno-heptose biosynthesis; ADP-L-glycero-beta-D-manno-heptose from D-glycero-beta-D-manno-heptose 7-phosphate: step 4/4. In terms of biological role, catalyzes the interconversion between ADP-D-glycero-beta-D-manno-heptose and ADP-L-glycero-beta-D-manno-heptose via an epimerization at carbon 6 of the heptose. The protein is ADP-L-glycero-D-manno-heptose-6-epimerase of Burkholderia mallei (strain NCTC 10247).